The following is a 193-amino-acid chain: Superoxide dismutase [Fe] (193 aa).

Fe cation contacts are provided by His27, His74, Asp157, and His161.

This sequence belongs to the iron/manganese superoxide dismutase family. Homodimer. Fe cation serves as cofactor.

It catalyses the reaction 2 superoxide + 2 H(+) = H2O2 + O2. In terms of biological role, destroys superoxide anion radicals which are normally produced within the cells and which are toxic to biological systems. This is Superoxide dismutase [Fe] (sodB) from Salmonella typhimurium (strain LT2 / SGSC1412 / ATCC 700720).